The chain runs to 488 residues: MSQISMFVRKLHKFSYNPNYKFKCGLEIHTQLKTKYKLFSLSPTSYNEPPNTKLSYFDVGLPGTQPLLNPEALLLALKASVALNCDIQSYSSFDRKHYFYADQPLGYQITQHYYPLAKNGYVQLNKFDDMPDKVISLEQVQLEQDTGKTVNYDDRINVDLNRANTPLIEVVTKPDFENIDQVQAFVRKYQLLVSHLDICTGDLETGAIRVDANISVNNNPRVEIKNLGSSGEIVDALKYEYNRQVTLLQNNGKIIQETRGWNGIATESLRKKENAVDYRYVPDSELPVIRLDKNIQAQLQNTLDELPDSVLDRLTKEPYNLQLAHARNLLFQPEILDYYENIFGRIRDANKWFFHELLAAFAKSDVEFQVDIVSPDMLVDIVSSVEKNEISLTGARIILKHIIRNKSTKTLPQLIKELDIGKPEASAELEEAINEICQQIINTNADVVEKIARGHTNALQVLIGQAMKATKGKVHAKEFRSKFMELLK.

The protein belongs to the GatB/GatE family. GatB subfamily. In terms of assembly, subunit of the heterotrimeric GatFAB amidotransferase (AdT) complex, composed of A, B and F subunits.

Its subcellular location is the mitochondrion. The catalysed reaction is L-glutamyl-tRNA(Gln) + L-glutamine + ATP + H2O = L-glutaminyl-tRNA(Gln) + L-glutamate + ADP + phosphate + H(+). Its function is as follows. Allows the formation of correctly charged Gln-tRNA(Gln) through the transamidation of misacylated Glu-tRNA(Gln) in the mitochondria. The reaction takes place in the presence of glutamine and ATP through an activated gamma-phospho-Glu-tRNA(Gln). The polypeptide is Glutamyl-tRNA(Gln) amidotransferase subunit B, mitochondrial (Candida albicans (strain WO-1) (Yeast)).